A 251-amino-acid polypeptide reads, in one-letter code: tRNA pseudouridine synthase A (251 aa).

Asp54 acts as the Nucleophile in catalysis. Tyr111 provides a ligand contact to substrate.

This sequence belongs to the tRNA pseudouridine synthase TruA family. Homodimer.

The enzyme catalyses uridine(38/39/40) in tRNA = pseudouridine(38/39/40) in tRNA. Its function is as follows. Formation of pseudouridine at positions 38, 39 and 40 in the anticodon stem and loop of transfer RNAs. In Mycoplasma mycoides subsp. mycoides SC (strain CCUG 32753 / NCTC 10114 / PG1), this protein is tRNA pseudouridine synthase A.